Here is a 305-residue protein sequence, read N- to C-terminus: UDP-3-O-acyl-N-acetylglucosamine deacetylase (305 aa).

Zn(2+)-binding residues include H79, H238, and D242. Catalysis depends on H265, which acts as the Proton donor.

This sequence belongs to the LpxC family. It depends on Zn(2+) as a cofactor.

The enzyme catalyses a UDP-3-O-[(3R)-3-hydroxyacyl]-N-acetyl-alpha-D-glucosamine + H2O = a UDP-3-O-[(3R)-3-hydroxyacyl]-alpha-D-glucosamine + acetate. The protein operates within glycolipid biosynthesis; lipid IV(A) biosynthesis; lipid IV(A) from (3R)-3-hydroxytetradecanoyl-[acyl-carrier-protein] and UDP-N-acetyl-alpha-D-glucosamine: step 2/6. Catalyzes the hydrolysis of UDP-3-O-myristoyl-N-acetylglucosamine to form UDP-3-O-myristoylglucosamine and acetate, the committed step in lipid A biosynthesis. This Salmonella arizonae (strain ATCC BAA-731 / CDC346-86 / RSK2980) protein is UDP-3-O-acyl-N-acetylglucosamine deacetylase.